The following is a 632-amino-acid chain: Myrcene synthase TPS3FN, chloroplastic (632 aa).

Residues 1-55 (MHCMAVHQFSPSIVSSLPTISTYNNNHFCRFFTPKTSISPISKTKSKSSTCYPIQ) constitute a chloroplast transit peptide. (2E)-geranyl diphosphate is bound by residues Arg-343, Asp-380, Asp-384, Arg-524, and Asp-527. Residues Asp-380 and Asp-384 each contribute to the Mg(2+) site. A DDXXD motif motif is present at residues 380-384 (DDIYD). Positions 527, 531, and 535 each coordinate Mg(2+).

The protein belongs to the terpene synthase family. Tpsb subfamily. The cofactor is Mg(2+). It depends on Mn(2+) as a cofactor. In terms of tissue distribution, expressed in glandular trichomes two to four weeks after flowering onset.

The protein localises to the plastid. It localises to the chloroplast. It catalyses the reaction (2E)-geranyl diphosphate = beta-myrcene + diphosphate. It participates in secondary metabolite biosynthesis; terpenoid biosynthesis. Involved in monoterpene (C10) olefins biosynthesis, constituants of cannabinoids and terpenoids-rich resins. Catalyzes strictly the conversion of (2E)-geranyl diphosphate to beta-myrcene. This chain is Myrcene synthase TPS3FN, chloroplastic, found in Cannabis sativa (Hemp).